A 205-amino-acid polypeptide reads, in one-letter code: Urease accessory protein UreE (205 aa).

The segment at 171-205 is disordered; it reads AHEAHPHAHSHAGGHGHVHSGHGHGGKHGEHDAES. Over residues 177-196 the composition is skewed to basic residues; it reads HAHSHAGGHGHVHSGHGHGG.

The protein belongs to the UreE family.

The protein resides in the cytoplasm. In terms of biological role, involved in urease metallocenter assembly. Binds nickel. Probably functions as a nickel donor during metallocenter assembly. In Bordetella parapertussis (strain 12822 / ATCC BAA-587 / NCTC 13253), this protein is Urease accessory protein UreE.